The following is a 372-amino-acid chain: Chloroplast protein FOR GROWTH AND FERTILITY 2 (372 aa).

Residues 1-20 form a disordered region; the sequence is MDRLLQPPSSHSIAPSKFQS. The N-terminal 78 residues, 1–78, are a transit peptide targeting the chloroplast; it reads MDRLLQPPSS…NQSSNFLIAS (78 aa). Residues 7–20 are compositionally biased toward polar residues; it reads PPSSHSIAPSKFQS. 7 helical membrane passes run 109 to 129, 161 to 181, 195 to 215, 231 to 251, 281 to 301, 309 to 329, and 352 to 372; these read VILV…PPAF, FFAG…LAPL, ALWG…FLLL, VVGL…SEMP, GIVH…LALP, FLIM…VFIG, and LVAI…FSLY.

As to expression, mostly expressed in leaves, stems and flowers, to a lower extent, in roots, floral bud, inflorescence and siliques, and, barely, in seedlings.

It localises to the plastid. The protein resides in the chloroplast membrane. It is found in the plastid membrane. In terms of biological role, together with CGF1, essential protein which supports female gametogenesis and embryogenesis, probably by securing local energy supply. This Arabidopsis thaliana (Mouse-ear cress) protein is Chloroplast protein FOR GROWTH AND FERTILITY 2.